The primary structure comprises 548 residues: CTP synthase (548 aa).

Residues 1 to 276 (MPTELTDYDP…DQYVMEQLGL (276 aa)) form an amidoligase domain region. Ser25 provides a ligand contact to CTP. Position 25 (Ser25) interacts with UTP. 26 to 31 (GLGKGI) lines the ATP pocket. Residue Tyr66 coordinates L-glutamine. Asp83 contacts ATP. Mg(2+)-binding residues include Asp83 and Glu151. CTP-binding positions include 158-160 (DIE), 197-202 (KTKPTQ), and Lys233. Residues 197–202 (KTKPTQ) and Lys233 each bind UTP. Residues 303–541 (DIALVGKYAM…VETILETTDT (239 aa)) form the Glutamine amidotransferase type-1 domain. Gly363 provides a ligand contact to L-glutamine. The active-site Nucleophile; for glutamine hydrolysis is the Cys390. L-glutamine-binding positions include 391–394 (LGFQ), Glu414, and Arg471. Active-site residues include His514 and Glu516.

The protein belongs to the CTP synthase family. Homotetramer.

It carries out the reaction UTP + L-glutamine + ATP + H2O = CTP + L-glutamate + ADP + phosphate + 2 H(+). The catalysed reaction is L-glutamine + H2O = L-glutamate + NH4(+). The enzyme catalyses UTP + NH4(+) + ATP = CTP + ADP + phosphate + 2 H(+). It functions in the pathway pyrimidine metabolism; CTP biosynthesis via de novo pathway; CTP from UDP: step 2/2. Its activity is regulated as follows. Allosterically activated by GTP, when glutamine is the substrate; GTP has no effect on the reaction when ammonia is the substrate. The allosteric effector GTP functions by stabilizing the protein conformation that binds the tetrahedral intermediate(s) formed during glutamine hydrolysis. Inhibited by the product CTP, via allosteric rather than competitive inhibition. Catalyzes the ATP-dependent amination of UTP to CTP with either L-glutamine or ammonia as the source of nitrogen. Regulates intracellular CTP levels through interactions with the four ribonucleotide triphosphates. In Natronomonas pharaonis (strain ATCC 35678 / DSM 2160 / CIP 103997 / JCM 8858 / NBRC 14720 / NCIMB 2260 / Gabara) (Halobacterium pharaonis), this protein is CTP synthase.